The chain runs to 1476 residues: ABC transporter G family member 17 (1476 aa).

Disordered regions lie at residues 13-45 and 68-91; these read SENN…YDYD and FREI…KPEN. Positions 14-67 form a coiled coil; sequence ENNNNNNNNNNNNNNNNNNNLNNNNDNDYDYDSINNIEEKFENVSKELEGQSIK. A compositionally biased stretch (low complexity) spans 15–39; sequence NNNNNNNNNNNNNNNNNNNLNNNND. The region spanning 151–402 is the ABC transporter 1 domain; sequence LNPFNYFKKD…FLDLGFDCEP (252 aa). Positions 507–751 constitute an ABC transmembrane type-2 1 domain; sequence WGDKFTLTSR…SLSVKGENYL (245 aa). Transmembrane regions (helical) follow at residues 517–537, 547–567, 592–612, 623–643, and 764–784; these read FLTI…QPLT, AIFT…HGAL, ILID…IVYF, FFIF…LFRG, and LNVV…LFAV. Positions 838 to 1082 constitute an ABC transporter 2 domain; it reads FSWKSISYTV…LTSYFERHGV (245 aa). 874-881 contacts ATP; it reads GSSGAGKT. Transmembrane regions (helical) follow at residues 1182–1202, 1219–1239, 1260–1280, 1298–1318, 1322–1342, and 1450–1470; these read FYTM…GFTF, SWEA…MFFI, LSMI…FFIA, WLMH…LGAA, IAIS…LCGV, and FGII…FVYL. The region spanning 1182 to 1405 is the ABC transmembrane type-2 2 domain; sequence FYTMGSFAQS…TDCQTYSAPF (224 aa).

Belongs to the ABC transporter superfamily. ABCG family. PDR (TC 3.A.1.205) subfamily.

Its subcellular location is the membrane. The chain is ABC transporter G family member 17 (abcG17-1) from Dictyostelium discoideum (Social amoeba).